Consider the following 108-residue polypeptide: Acid stress chaperone HdeB (108 aa).

A signal peptide spans 1 to 29 (MNISSLRKAFIFMGAVAALSLVNAQSALA). Lys93 carries the post-translational modification N6-acetyllysine.

It belongs to the HdeB family.

The protein localises to the periplasm. Functionally, required for optimal acid stress protection, which is important for survival of enteric bacteria in the acidic environment of the host stomach. Exhibits a chaperone-like activity at acidic pH by preventing the aggregation of many different periplasmic proteins. The sequence is that of Acid stress chaperone HdeB from Escherichia coli O6:H1 (strain CFT073 / ATCC 700928 / UPEC).